The chain runs to 345 residues: NADPH dehydrogenase (345 aa).

23–26 (SPMC) is a binding site for FMN. Tyr-28 serves as a coordination point for substrate. Positions 60 and 102 each coordinate FMN. Substrate is bound at residue 164–167 (HGAH). FMN is bound by residues Arg-215 and 307-308 (GR).

Belongs to the NADH:flavin oxidoreductase/NADH oxidase family. NamA subfamily. In terms of assembly, homotetramer. It depends on FMN as a cofactor.

The enzyme catalyses A + NADPH + H(+) = AH2 + NADP(+). Its function is as follows. Catalyzes the reduction of the double bond of an array of alpha,beta-unsaturated aldehydes and ketones. It also reduces the nitro group of nitroester and nitroaromatic compounds. It could have a role in detoxification processes. This chain is NADPH dehydrogenase, found in Bacillus cereus (strain AH820).